A 685-amino-acid polypeptide reads, in one-letter code: Methionine--tRNA ligase (685 aa).

A 'HIGH' region motif is present at residues proline 12–histidine 22. 4 residues coordinate Zn(2+): cysteine 143, cysteine 146, cysteine 156, and cysteine 159. Positions lysine 339 to serine 343 match the 'KMSKS' region motif. An ATP-binding site is contributed by lysine 342. In terms of domain architecture, tRNA-binding spans aspartate 582–glycine 685.

It belongs to the class-I aminoacyl-tRNA synthetase family. MetG type 1 subfamily. Homodimer. Requires Zn(2+) as cofactor.

The protein localises to the cytoplasm. It carries out the reaction tRNA(Met) + L-methionine + ATP = L-methionyl-tRNA(Met) + AMP + diphosphate. Is required not only for elongation of protein synthesis but also for the initiation of all mRNA translation through initiator tRNA(fMet) aminoacylation. This chain is Methionine--tRNA ligase, found in Neisseria meningitidis serogroup A / serotype 4A (strain DSM 15465 / Z2491).